Reading from the N-terminus, the 205-residue chain is Small ribosomal subunit protein mS26 (205 aa).

The N-terminal 26 residues, 1–26 (MLRALSTLGARPLGRPPAQFLLLARG), are a transit peptide targeting the mitochondrion.

The protein belongs to the mitochondrion-specific ribosomal protein mS26 family. In terms of assembly, component of the mitochondrial ribosome small subunit (28S) which comprises a 12S rRNA and about 30 distinct proteins.

The protein resides in the mitochondrion. The chain is Small ribosomal subunit protein mS26 (MRPS26) from Bos taurus (Bovine).